A 435-amino-acid polypeptide reads, in one-letter code: Putative F-box/kelch-repeat protein At1g20790 (435 aa).

An F-box domain is found at 1-49 (MKRLPLHLLDEILFNLDPKSLGKMRCTNKSINTHISDDPNFKFEYFSRI). Kelch repeat units lie at residues 192–238 (PVYV…CTGD) and 280–335 (LYWN…LFKP).

The sequence is that of Putative F-box/kelch-repeat protein At1g20790 from Arabidopsis thaliana (Mouse-ear cress).